The primary structure comprises 413 residues: Arginine biosynthesis bifunctional protein ArgJ (413 aa).

Substrate-binding residues include Thr160, Lys186, Thr197, Glu284, Asn408, and Ser413. Residue Thr197 is the Nucleophile of the active site.

This sequence belongs to the ArgJ family. As to quaternary structure, heterotetramer of two alpha and two beta chains.

It localises to the cytoplasm. The enzyme catalyses N(2)-acetyl-L-ornithine + L-glutamate = N-acetyl-L-glutamate + L-ornithine. The catalysed reaction is L-glutamate + acetyl-CoA = N-acetyl-L-glutamate + CoA + H(+). It participates in amino-acid biosynthesis; L-arginine biosynthesis; L-ornithine and N-acetyl-L-glutamate from L-glutamate and N(2)-acetyl-L-ornithine (cyclic): step 1/1. It functions in the pathway amino-acid biosynthesis; L-arginine biosynthesis; N(2)-acetyl-L-ornithine from L-glutamate: step 1/4. Its function is as follows. Catalyzes two activities which are involved in the cyclic version of arginine biosynthesis: the synthesis of N-acetylglutamate from glutamate and acetyl-CoA as the acetyl donor, and of ornithine by transacetylation between N(2)-acetylornithine and glutamate. The polypeptide is Arginine biosynthesis bifunctional protein ArgJ (Burkholderia pseudomallei (strain K96243)).